Consider the following 204-residue polypeptide: MMRTLITIHPLPLLLLLQQLLQPVQFQEVDTDFDFSEDKKEEFEEYLEQFFSTGPTRPPTKEKVKRRVLIEPGMPLNHIEYCNHEIMGKNVYYKHRCVAEHYFLLMQYDELQNICYNRFVPCKNGIRKCNRSKGLVEGVYCNLTEAFEIPACKYESFYRKGYVLITCAWQNELQKLIPHTINDLVEPSEHRSFLSEDGVFVIPP.

Residues 1-26 (MMRTLITIHPLPLLLLLQQLLQPVQF) form the signal peptide. 3 disulfides stabilise this stretch: C97–C152, C115–C167, and C122–C129. 2 N-linked (GlcNAc...) asparagine glycosylation sites follow: N130 and N142.

The protein belongs to the pancreatic ribonuclease family.

The protein localises to the secreted. Does not exhibit any ribonuclease activity. The chain is Inactive ribonuclease-like protein 9 (RNASE9) from Symphalangus syndactylus (Siamang).